Here is a 610-residue protein sequence, read N- to C-terminus: Serine/threonine-protein kinase VRK1 (610 aa).

Residues 32–384 (FIVGKQFATG…PRKRTTRKAV (353 aa)) enclose the Protein kinase domain. Residues 38 to 46 (FATGGFGRI) and lysine 61 contribute to the ATP site. Aspartate 167 (proton acceptor) is an active-site residue. Disordered regions lie at residues 317–476 (IQKT…NKVA), 498–530 (ISVA…VGEG), 544–577 (KKAK…KGRR), and 590–610 (ERLA…SSEV). Residues 352-373 (AVKEESDNKDNDEVEVKPEKKA) show a composition bias toward basic and acidic residues. A compositionally biased stretch (acidic residues) spans 388-397 (NDSDDNEEQY). Over residues 447 to 458 (TTPSSAASTSRS) the composition is skewed to low complexity. Polar residues predominate over residues 465–474 (LTSSTASSNK). Over residues 502–517 (SDKSPTTSTPSSSSGL) the composition is skewed to low complexity. Composition is skewed to polar residues over residues 550-559 (SGISSATKAS) and 594-610 (SRQT…SSEV).

The protein belongs to the protein kinase superfamily. CK1 Ser/Thr protein kinase family. VRK subfamily. Post-translationally, autophosphorylates in vitro. In terms of tissue distribution, present in germ cells at all stages of progression from the mitotic zone to mature oocytes, but not in maturing spermatids (at the protein level). Expressed in the ventral nerve cord and vulva cells.

It localises to the nucleus. It is found in the cytoplasm. The protein resides in the cajal body. The catalysed reaction is L-seryl-[protein] + ATP = O-phospho-L-seryl-[protein] + ADP + H(+). It catalyses the reaction L-threonyl-[protein] + ATP = O-phospho-L-threonyl-[protein] + ADP + H(+). In terms of biological role, serine/threonine kinase that phosphorylates baf-1, thus regulating the association of baf-1 with chromatin and nuclear membrane proteins during nuclear envelope formation. May act through the egl-17 signaling pathway. Essential in hermaphrodites for formation of the vulva, uterus, and uterine seam cells and for development and maintenance of the somatic gonad and thus the germ line. Acts to prevent cep-1 from triggering an inappropriate cell cycle arrest, thereby promoting germ cell proliferation. Regulates anchor cell polarity and the timing of anchor cell invasion through the basement membranes separating vulval and somatic gonadal cells during the L3 larval stage. The protein is Serine/threonine-protein kinase VRK1 of Caenorhabditis elegans.